The sequence spans 210 residues: Ribosomal RNA small subunit methyltransferase G (210 aa).

Residues glycine 80, leucine 85, 131 to 132, and arginine 146 each bind S-adenosyl-L-methionine; that span reads VE.

It belongs to the methyltransferase superfamily. RNA methyltransferase RsmG family.

The protein localises to the cytoplasm. The catalysed reaction is guanosine(527) in 16S rRNA + S-adenosyl-L-methionine = N(7)-methylguanosine(527) in 16S rRNA + S-adenosyl-L-homocysteine. Specifically methylates the N7 position of guanine in position 527 of 16S rRNA. In Pasteurella multocida (strain Pm70), this protein is Ribosomal RNA small subunit methyltransferase G.